Reading from the N-terminus, the 261-residue chain is Vacuolar iron transporter (261 aa).

A helical membrane pass occupies residues glycine 66–glycine 86. Glutamate 105, glutamate 108, glutamate 116, glutamate 119, and glutamate 154 together coordinate Fe cation. The next 3 membrane-spanning stretches (helical) occupy residues methionine 170 to isoleucine 190, isoleucine 197 to phenylalanine 217, and glycine 233 to isoleucine 253.

The protein belongs to the CCC1 family.

Its subcellular location is the vacuole membrane. The catalysed reaction is Fe(2+)(in) = Fe(2+)(out). Functionally, vacuolar iron transporter involved in the transfer of iron ions from the cytosol to the vacuole for intracellular iron storage. The polypeptide is Vacuolar iron transporter (Acanthamoeba castellanii (strain ATCC 30010 / Neff)).